The following is a 393-amino-acid chain: Glutamyl-tRNA reductase (393 aa).

Substrate-binding positions include 47–50 (TCGR), S98, 103–105 (ETD), and Q109. The active-site Nucleophile is C48. An NADP(+)-binding site is contributed by 177–182 (GAGAVG).

The protein belongs to the glutamyl-tRNA reductase family. As to quaternary structure, homodimer.

It carries out the reaction (S)-4-amino-5-oxopentanoate + tRNA(Glu) + NADP(+) = L-glutamyl-tRNA(Glu) + NADPH + H(+). The protein operates within porphyrin-containing compound metabolism; protoporphyrin-IX biosynthesis; 5-aminolevulinate from L-glutamyl-tRNA(Glu): step 1/2. In terms of biological role, catalyzes the NADPH-dependent reduction of glutamyl-tRNA(Glu) to glutamate 1-semialdehyde (GSA). The chain is Glutamyl-tRNA reductase from Pyrobaculum islandicum (strain DSM 4184 / JCM 9189 / GEO3).